The sequence spans 108 residues: Large ribosomal subunit protein uL24 (108 aa).

The protein belongs to the universal ribosomal protein uL24 family. In terms of assembly, part of the 50S ribosomal subunit.

One of two assembly initiator proteins, it binds directly to the 5'-end of the 23S rRNA, where it nucleates assembly of the 50S subunit. In terms of biological role, one of the proteins that surrounds the polypeptide exit tunnel on the outside of the subunit. This Geobacter sulfurreducens (strain ATCC 51573 / DSM 12127 / PCA) protein is Large ribosomal subunit protein uL24.